A 90-amino-acid chain; its full sequence is Probable Fe(2+)-trafficking protein (90 aa).

Belongs to the Fe(2+)-trafficking protein family. As to quaternary structure, monomer.

In terms of biological role, could be a mediator in iron transactions between iron acquisition and iron-requiring processes, such as synthesis and/or repair of Fe-S clusters in biosynthetic enzymes. The sequence is that of Probable Fe(2+)-trafficking protein from Enterobacter sp. (strain 638).